The primary structure comprises 411 residues: CinA-like protein (411 aa).

The protein belongs to the CinA family.

The sequence is that of CinA-like protein from Dictyoglomus thermophilum (strain ATCC 35947 / DSM 3960 / H-6-12).